The primary structure comprises 417 residues: Serine hydroxymethyltransferase 1 (417 aa).

(6S)-5,6,7,8-tetrahydrofolate is bound by residues L121 and 125–127; that span reads GHL. K230 carries the post-translational modification N6-(pyridoxal phosphate)lysine. Position 355–357 (355–357) interacts with (6S)-5,6,7,8-tetrahydrofolate; sequence SPF.

The protein belongs to the SHMT family. In terms of assembly, homodimer. It depends on pyridoxal 5'-phosphate as a cofactor.

The protein localises to the cytoplasm. The enzyme catalyses (6R)-5,10-methylene-5,6,7,8-tetrahydrofolate + glycine + H2O = (6S)-5,6,7,8-tetrahydrofolate + L-serine. The protein operates within one-carbon metabolism; tetrahydrofolate interconversion. Its pathway is amino-acid biosynthesis; glycine biosynthesis; glycine from L-serine: step 1/1. Its function is as follows. Catalyzes the reversible interconversion of serine and glycine with tetrahydrofolate (THF) serving as the one-carbon carrier. This reaction serves as the major source of one-carbon groups required for the biosynthesis of purines, thymidylate, methionine, and other important biomolecules. Also exhibits THF-independent aldolase activity toward beta-hydroxyamino acids, producing glycine and aldehydes, via a retro-aldol mechanism. The protein is Serine hydroxymethyltransferase 1 of Pseudomonas putida (strain ATCC 47054 / DSM 6125 / CFBP 8728 / NCIMB 11950 / KT2440).